The chain runs to 417 residues: Cell division protein FtsA (417 aa).

It belongs to the FtsA/MreB family. As to quaternary structure, self-interacts. Interacts with FtsZ.

The protein localises to the cell inner membrane. Functionally, cell division protein that is involved in the assembly of the Z ring. May serve as a membrane anchor for the Z ring. The polypeptide is Cell division protein FtsA (Pseudomonas aeruginosa (strain ATCC 15692 / DSM 22644 / CIP 104116 / JCM 14847 / LMG 12228 / 1C / PRS 101 / PAO1)).